The primary structure comprises 404 residues: Glycosylated lysosomal membrane protein (404 aa).

The signal sequence occupies residues 1–35 (MFRCWGPHWGWVPCAPTPWLLLSLLVCSAPFGLQG). The Lumenal portion of the chain corresponds to 36-370 (EETRQVSMEV…VDIFSPLVLG (335 aa)). 9 N-linked (GlcNAc...) asparagine glycosylation sites follow: Asn64, Asn85, Asn94, Asn133, Asn157, Asn166, Asn185, Asn228, and Asn331. The chain crosses the membrane as a helical span at residues 371–391 (IMAVALGAPGLMFLGGGLFLL). Topologically, residues 392–404 (LRHRRYSEYQSIN) are cytoplasmic. The Lysosomal targeting motif signature appears at 400–404 (YQSIN).

The protein belongs to the GLMP family. As to quaternary structure, interacts (via lumenal domain) with lysosomal protein MFSD1; the interaction starts while both proteins are still in the endoplasmic reticulum and is required for stabilization of MFSD1 in lysosomes but has no direct effect on its targeting to lysosomes or transporter activity. Post-translationally, highly N-glycosylated. N-glycosylation is essential for GLMP stability and for MFSD1 lysosomal localization. Detected in brain, heart, liver, kidney, lung, intestine, testis and spleen. Expressed at highest levels in kidney cortex. However, another study reports highest expression levels in lung. Expressed in myoblasts with expression increasing during differentiation into myotubes.

The protein localises to the lysosome membrane. Functionally, required to protect lysosomal transporter MFSD1 from lysosomal proteolysis and for MFSD1 lysosomal localization. This is Glycosylated lysosomal membrane protein from Mus musculus (Mouse).